Here is a 300-residue protein sequence, read N- to C-terminus: MKSFVWTLLGALSLGSLTTAYGANASNSSVPTPDNTLVVSYTNTSCYTSGPLSPDTRFNRTTRGTFSKVRDALKFRLNGPIHHWDIANELFDTALGVEIIDTQYGINNRTSRDWCTAVSALEKGDLIEFAAAFTAFDDVNPTKEVVPDALVGTLALWAKYSYEYDLTSIVSLFGKNWTVDELGWGTYIAHSLNEISSNTTGAANATLFIDTQTKSDCYKLASTIESWKYAPLSAFPNYGPFYIYGQCVATFTSGYSPLVEPAFTFASALNTTLNSFPNGTLPTQTQVVGDIGVKFLQYFA.

The first 22 residues, 1–22 (MKSFVWTLLGALSLGSLTTAYG), serve as a signal peptide directing secretion.

Its subcellular location is the endoplasmic reticulum. This is an uncharacterized protein from Schizosaccharomyces pombe (strain 972 / ATCC 24843) (Fission yeast).